The primary structure comprises 1293 residues: DNA-directed RNA polymerase subunit beta' (1293 aa).

Zn(2+) is bound by residues Cys-60, Cys-62, Cys-75, and Cys-78. Mg(2+) contacts are provided by Asp-535, Asp-537, and Asp-539. Residues Cys-873, Cys-950, Cys-957, and Cys-960 each contribute to the Zn(2+) site.

Belongs to the RNA polymerase beta' chain family. In terms of assembly, the RNAP catalytic core consists of 2 alpha, 1 beta, 1 beta' and 1 omega subunit. When a sigma factor is associated with the core the holoenzyme is formed, which can initiate transcription. Mg(2+) is required as a cofactor. It depends on Zn(2+) as a cofactor.

It catalyses the reaction RNA(n) + a ribonucleoside 5'-triphosphate = RNA(n+1) + diphosphate. Functionally, DNA-dependent RNA polymerase catalyzes the transcription of DNA into RNA using the four ribonucleoside triphosphates as substrates. In Cutibacterium acnes (strain DSM 16379 / KPA171202) (Propionibacterium acnes), this protein is DNA-directed RNA polymerase subunit beta'.